Reading from the N-terminus, the 531-residue chain is T-complex protein 1 subunit zeta-2 (531 aa).

This sequence belongs to the TCP-1 chaperonin family. In terms of assembly, component of the chaperonin-containing T-complex (TRiC), a heterooligomeric complex of about 850 to 900 kDa that forms two stacked rings, 12 to 16 nm in diameter.

It localises to the cytoplasm. Functionally, component of the chaperonin-containing T-complex (TRiC), a molecular chaperone complex that assists the folding of proteins upon ATP hydrolysis. The polypeptide is T-complex protein 1 subunit zeta-2 (CCT6B) (Bos taurus (Bovine)).